Reading from the N-terminus, the 224-residue chain is Ribose-5-phosphate isomerase A (224 aa).

Substrate contacts are provided by residues 26–29 (TGST), 82–85 (DGAD), and 95–98 (KGGG). Glutamate 104 acts as the Proton acceptor in catalysis. Lysine 122 is a binding site for substrate.

Belongs to the ribose 5-phosphate isomerase family. Homodimer.

The enzyme catalyses aldehydo-D-ribose 5-phosphate = D-ribulose 5-phosphate. It functions in the pathway carbohydrate degradation; pentose phosphate pathway; D-ribose 5-phosphate from D-ribulose 5-phosphate (non-oxidative stage): step 1/1. In terms of biological role, catalyzes the reversible conversion of ribose-5-phosphate to ribulose 5-phosphate. This is Ribose-5-phosphate isomerase A from Streptococcus suis (strain 98HAH33).